We begin with the raw amino-acid sequence, 312 residues long: 4-hydroxy-3-methylbut-2-enyl diphosphate reductase (312 aa).

C15 is a binding site for [4Fe-4S] cluster. (2E)-4-hydroxy-3-methylbut-2-enyl diphosphate contacts are provided by H44 and H77. Positions 44 and 77 each coordinate dimethylallyl diphosphate. Isopentenyl diphosphate contacts are provided by H44 and H77. Position 99 (C99) interacts with [4Fe-4S] cluster. A (2E)-4-hydroxy-3-methylbut-2-enyl diphosphate-binding site is contributed by H127. Residue H127 coordinates dimethylallyl diphosphate. H127 lines the isopentenyl diphosphate pocket. Residue E129 is the Proton donor of the active site. Residue T167 coordinates (2E)-4-hydroxy-3-methylbut-2-enyl diphosphate. C197 is a binding site for [4Fe-4S] cluster. (2E)-4-hydroxy-3-methylbut-2-enyl diphosphate-binding residues include S225, S226, N227, and S269. Positions 225, 226, 227, and 269 each coordinate dimethylallyl diphosphate. Isopentenyl diphosphate is bound by residues S225, S226, N227, and S269.

This sequence belongs to the IspH family. [4Fe-4S] cluster serves as cofactor.

It carries out the reaction isopentenyl diphosphate + 2 oxidized [2Fe-2S]-[ferredoxin] + H2O = (2E)-4-hydroxy-3-methylbut-2-enyl diphosphate + 2 reduced [2Fe-2S]-[ferredoxin] + 2 H(+). It catalyses the reaction dimethylallyl diphosphate + 2 oxidized [2Fe-2S]-[ferredoxin] + H2O = (2E)-4-hydroxy-3-methylbut-2-enyl diphosphate + 2 reduced [2Fe-2S]-[ferredoxin] + 2 H(+). Its pathway is isoprenoid biosynthesis; dimethylallyl diphosphate biosynthesis; dimethylallyl diphosphate from (2E)-4-hydroxy-3-methylbutenyl diphosphate: step 1/1. The protein operates within isoprenoid biosynthesis; isopentenyl diphosphate biosynthesis via DXP pathway; isopentenyl diphosphate from 1-deoxy-D-xylulose 5-phosphate: step 6/6. In terms of biological role, catalyzes the conversion of 1-hydroxy-2-methyl-2-(E)-butenyl 4-diphosphate (HMBPP) into a mixture of isopentenyl diphosphate (IPP) and dimethylallyl diphosphate (DMAPP). Acts in the terminal step of the DOXP/MEP pathway for isoprenoid precursor biosynthesis. In Azoarcus sp. (strain BH72), this protein is 4-hydroxy-3-methylbut-2-enyl diphosphate reductase.